Consider the following 602-residue polypeptide: Protein NRT1/ PTR FAMILY 5.7 (602 aa).

2 consecutive transmembrane segments (helical) span residues Leu-56–Leu-73 and Trp-87–Gly-107. Thr-111 carries the post-translational modification Phosphothreonine. The next 10 helical transmembrane spans lie at Val-112 to Ile-132, Ile-152 to Leu-172, Trp-197 to Glu-217, Ile-220 to Phe-240, Val-337 to Ala-357, Ile-381 to Ile-401, Ile-422 to Leu-442, Ile-465 to Leu-485, Leu-500 to Ile-520, and Phe-548 to Met-568.

Belongs to the major facilitator superfamily. Proton-dependent oligopeptide transporter (POT/PTR) (TC 2.A.17) family. In terms of tissue distribution, expressed in shoots, stems, leaves and flowers.

It localises to the membrane. This is Protein NRT1/ PTR FAMILY 5.7 (NPF5.7) from Arabidopsis thaliana (Mouse-ear cress).